A 383-amino-acid polypeptide reads, in one-letter code: Delta(12)-fatty-acid desaturase (383 aa).

The disordered stretch occupies residues 1 to 24 (MGAGGRMPVPTSSKKSETDTTKRV). Over residues 14–24 (KKSETDTTKRV) the composition is skewed to basic and acidic residues. A helical transmembrane segment spans residues 56-76 (LISDIIIASCFYYVATNYFSL). A Histidine box-1 motif is present at residues 105–109 (HECGH). A helical membrane pass occupies residues 117-137 (WLDDTVGLIFHSFLLVPYFSW). The Histidine box-2 motif lies at 141–145 (HRRHH). 3 consecutive transmembrane segments (helical) span residues 179 to 199 (IMMLTVQFVLGWPLYLAFNVS), 225 to 245 (IYLSDAGILAVCFGLYRYAAA), and 252 to 272 (ICLYGVPLLIVNAFLVLITYL). The Histidine box-3 motif lies at 315–319 (HVAHH).

The protein belongs to the fatty acid desaturase type 1 family. In terms of assembly, homo- and heterodimer. Interacts with FAD3 but not with FAD6. FAD2-FAD3 heterodimers can form a metabolic channel in which 18:1-PC is converted to 18:3-PC without releasing a free 18:2-PC intermediate. In terms of tissue distribution, expressed in shoots and roots. Expressed in leaves, stems, flowers and siliques.

It is found in the endoplasmic reticulum membrane. The protein localises to the microsome membrane. It carries out the reaction (9Z)-octadecenoyl-CoA + 2 Fe(II)-[cytochrome b5] + O2 + 2 H(+) = (9Z,12Z)-octadecadienoyl-CoA + 2 Fe(III)-[cytochrome b5] + 2 H2O. The enzyme catalyses (9Z)-hexadecenoyl-CoA + 2 Fe(II)-[cytochrome b5] + O2 + 2 H(+) = (9Z,12Z)-hexadecadienoyl-CoA + 2 Fe(III)-[cytochrome b5] + 2 H2O. It catalyses the reaction a (9Z)-octadecenoyl-containing glycerolipid + 2 Fe(II)-[cytochrome b5] + O2 + 2 H(+) = a (9Z,12Z)-octadecadienoyl-containing glycerolipid + 2 Fe(III)-[cytochrome b5] + 2 H2O. The catalysed reaction is (9Z)-octadecenoyl-CoA + AH2 + O2 = (9Z,12Z)-octadecadienoyl-CoA + A + 2 H2O. It carries out the reaction (9Z)-hexadecenoyl-CoA + AH2 + O2 = (9Z,12Z)-hexadecadienoyl-CoA + A + 2 H2O. The enzyme catalyses (9Z)-tetradecenoyl-CoA + 2 Fe(II)-[cytochrome b5] + O2 + 2 H(+) = (9Z,12Z)-tetradecadienoyl-CoA + 2 Fe(III)-[cytochrome b5] + 2 H2O. It catalyses the reaction (9Z)-pentadecenoyl-CoA + 2 Fe(II)-[cytochrome b5] + O2 + 2 H(+) = (9Z,12Z)-pentadecadienoyl-CoA + 2 Fe(III)-[cytochrome b5] + 2 H2O. The catalysed reaction is (9Z)-heptadecenoyl-CoA + 2 Fe(II)-[cytochrome b5] + O2 + 2 H(+) = (9Z,12Z)-heptadecadienoyl-CoA + 2 Fe(III)-[cytochrome b5] + 2 H2O. It functions in the pathway lipid metabolism; polyunsaturated fatty acid biosynthesis. ER (microsomal) omega-6 fatty acid desaturase introduces the second double bond in the biosynthesis of 18:3 fatty acids, important constituents of plant membranes. Delta(12)-desaturase with regioselectivity determined by the double bond (delta(9) position) and carboxyl group of the substrate. Can use both 16:1 and 18:1 fatty acids as substrates. It is thought to use cytochrome b5 as an electron donor and to act on fatty acids esterified to phosphatidylcholine (PC) and, possibly, other phospholipids. Very low constitutive hydroxylation activity. Required for desaturation of fatty acids present in extraplastidial membranes, including mitochondria. Required for salt tolerance during seed germination and early seedling growth. This is Delta(12)-fatty-acid desaturase from Arabidopsis thaliana (Mouse-ear cress).